Consider the following 447-residue polypeptide: Polyamine export protein (447 aa).

Residues 1 to 4 (MLNS) are Cytoplasmic-facing. The region spanning 1–197 (MLNSIFIIFC…ALAGVLRKQE (197 aa)) is the CNNM transmembrane domain. The helical transmembrane segment at 5-25 (IFIIFCLIAVSAFFSISEISL) threads the bilayer. At 26–54 (AASRKIKLKLLADEGSINAQRVLKMQENP) the chain is on the periplasmic side. Residues 55–75 (GMFFTVVQIGLNAVAILGGIV) traverse the membrane as a helical segment. Residues 76 to 99 (GDAAFSPAFSALFSHYMSPELSEQ) lie on the Cytoplasmic side of the membrane. A helical transmembrane segment spans residues 100-120 (LSFILSFSLVTGLFILFADLT). At 121-141 (PKRIGMIAPEAVALRIINPMR) the chain is on the periplasmic side. The helical transmembrane segment at 142-162 (FCLFVFRPLVWLFNGMANNIF) threads the bilayer. At 163–447 (RLFKIPMVRK…DAQGKEDSAA (285 aa)) the chain is on the cytoplasmic side. 2 consecutive CBS domains span residues 216 to 275 (MTSR…NQSM) and 282 to 343 (QIRN…GLEE).

The protein belongs to the UPF0053 family. PaeA subfamily.

The protein resides in the cell inner membrane. Its function is as follows. Involved in cadaverine and putrescine tolerance in stationary phase. May facilitate the efflux of both cadaverine and putrescine from the cytoplasm, reducing potentially toxic levels under certain stress conditions. This Salmonella typhimurium (strain 14028s / SGSC 2262) protein is Polyamine export protein.